The following is a 225-amino-acid chain: Probable glutathione S-transferase (225 aa).

Positions 6–85 (EDVKLLGIVG…YIDETWKNNP (80 aa)) constitute a GST N-terminal domain. Glutathione is bound by residues serine 16, lysine 43, valine 57, and 69–70 (ES). Positions 90–214 (DPYQRALARF…PPRDPLFAYF (125 aa)) constitute a GST C-terminal domain.

This sequence belongs to the GST superfamily. HSP26 family.

It carries out the reaction RX + glutathione = an S-substituted glutathione + a halide anion + H(+). Its function is as follows. May play a role in the cellular response to stress. The sequence is that of Probable glutathione S-transferase (HSP26-A) from Glycine max (Soybean).